Here is a 566-residue protein sequence, read N- to C-terminus: Probable F-box protein At5g39490 (566 aa).

An F-box domain is found at Ala8–Gln54. The interval Leu318–Asn338 is disordered. The span at Lys320 to Ser332 shows a compositional bias: low complexity.

This is Probable F-box protein At5g39490 from Arabidopsis thaliana (Mouse-ear cress).